A 241-amino-acid polypeptide reads, in one-letter code: Uridylate kinase (241 aa).

Residue 15 to 18 (KISG) participates in ATP binding. An involved in allosteric activation by GTP region spans residues 23–28 (GDQGFG). Glycine 57 is a binding site for UMP. 2 residues coordinate ATP: glycine 58 and arginine 62. UMP-binding positions include aspartate 77 and 138 to 145 (TGNPYFTT). The ATP site is built by threonine 165, tyrosine 171, and aspartate 174.

This sequence belongs to the UMP kinase family. As to quaternary structure, homohexamer.

It is found in the cytoplasm. The enzyme catalyses UMP + ATP = UDP + ADP. It functions in the pathway pyrimidine metabolism; CTP biosynthesis via de novo pathway; UDP from UMP (UMPK route): step 1/1. With respect to regulation, allosterically activated by GTP. Inhibited by UTP. Catalyzes the reversible phosphorylation of UMP to UDP. This chain is Uridylate kinase, found in Paracoccus zeaxanthinifaciens.